The chain runs to 302 residues: MNLQVEVGGLKLKNPVMTASGTFGFGREYGEYIDLNQLGAIVVKGLTVKPKEGNPPPRVYETPCGMLNSVGLQNSGVDAFIEKELPFLRDYDVAVIVNIAGETIEEFAYMAKKLDIDGVDGIEINVSCPNVKKGGMAFGINPEDIFNITKEVKKVTQKTVIVKLTPNVGDIGVCAKAAEDGGADAVSLINTIAGMAINIDTRTPVFKNVIAGLSGPAIKPIALRMVYEAARAVKIPVIGMGGISSFKDALEFMIAGAKAVAIGTCNFVNPNCTIEVIEGIKQYMVLNNIEDINEIIGSLKVD.

FMN is bound by residues Ser-20 and 44 to 45 (KG). Substrate-binding positions include Lys-44 and 68 to 72 (NSVGL). 2 residues coordinate FMN: Asn-98 and Asn-125. Asn-125 provides a ligand contact to substrate. The active-site Nucleophile is the Cys-128. The FMN site is built by Lys-163 and Ile-189. Residue 190-191 (NT) participates in substrate binding. Residues Gly-215, 241–242 (GG), and 263–264 (GT) contribute to the FMN site.

The protein belongs to the dihydroorotate dehydrogenase family. Type 1 subfamily. As to quaternary structure, heterotetramer of 2 PyrK and 2 PyrD type B subunits. Requires FMN as cofactor.

The protein localises to the cytoplasm. The enzyme catalyses (S)-dihydroorotate + NAD(+) = orotate + NADH + H(+). It participates in pyrimidine metabolism; UMP biosynthesis via de novo pathway; orotate from (S)-dihydroorotate (NAD(+) route): step 1/1. Catalyzes the conversion of dihydroorotate to orotate with NAD(+) as electron acceptor. The chain is Dihydroorotate dehydrogenase B (NAD(+)), catalytic subunit (pyrD) from Thermoanaerobacter sp. (strain X514).